A 318-amino-acid chain; its full sequence is Ribosomal RNA small subunit methyltransferase H (318 aa).

Residues 34 to 36 (GGY), D52, F79, D100, and Q107 contribute to the S-adenosyl-L-methionine site. The tract at residues 286 to 318 (GPAPDEARANPRARSAKLRAAARTAAPAWETVS) is disordered. Positions 303-318 (LRAAARTAAPAWETVS) are enriched in low complexity.

It belongs to the methyltransferase superfamily. RsmH family.

It localises to the cytoplasm. It catalyses the reaction cytidine(1402) in 16S rRNA + S-adenosyl-L-methionine = N(4)-methylcytidine(1402) in 16S rRNA + S-adenosyl-L-homocysteine + H(+). In terms of biological role, specifically methylates the N4 position of cytidine in position 1402 (C1402) of 16S rRNA. This chain is Ribosomal RNA small subunit methyltransferase H, found in Paramagnetospirillum magneticum (strain ATCC 700264 / AMB-1) (Magnetospirillum magneticum).